Here is a 376-residue protein sequence, read N- to C-terminus: Queuine tRNA-ribosyltransferase (376 aa).

Residue D93 is the Proton acceptor of the active site. Residues 93–97, D147, Q190, and G217 contribute to the substrate site; that span reads DSGGF. The interval 248-254 is RNA binding; sequence GVGKPDD. Residue D267 is the Nucleophile of the active site. Zn(2+) is bound by residues C305, C307, C310, and H336.

Belongs to the queuine tRNA-ribosyltransferase family. As to quaternary structure, homodimer. Within each dimer, one monomer is responsible for RNA recognition and catalysis, while the other monomer binds to the replacement base PreQ1. The cofactor is Zn(2+).

The catalysed reaction is 7-aminomethyl-7-carbaguanine + guanosine(34) in tRNA = 7-aminomethyl-7-carbaguanosine(34) in tRNA + guanine. It functions in the pathway tRNA modification; tRNA-queuosine biosynthesis. Functionally, catalyzes the base-exchange of a guanine (G) residue with the queuine precursor 7-aminomethyl-7-deazaguanine (PreQ1) at position 34 (anticodon wobble position) in tRNAs with GU(N) anticodons (tRNA-Asp, -Asn, -His and -Tyr). Catalysis occurs through a double-displacement mechanism. The nucleophile active site attacks the C1' of nucleotide 34 to detach the guanine base from the RNA, forming a covalent enzyme-RNA intermediate. The proton acceptor active site deprotonates the incoming PreQ1, allowing a nucleophilic attack on the C1' of the ribose to form the product. After dissociation, two additional enzymatic reactions on the tRNA convert PreQ1 to queuine (Q), resulting in the hypermodified nucleoside queuosine (7-(((4,5-cis-dihydroxy-2-cyclopenten-1-yl)amino)methyl)-7-deazaguanosine). This is Queuine tRNA-ribosyltransferase from Jannaschia sp. (strain CCS1).